The following is a 379-amino-acid chain: Probable homogentisate phytyltransferase 2, chloroplastic (379 aa).

The interval 1–39 (MASLASPPLPCRAAATASRSGRPAPRLLGPPPPPASPLL) is disordered. The N-terminal 65 residues, 1–65 (MASLASPPLP…WSRRDAVRVC (65 aa)), are a transit peptide targeting the chloroplast. Transmembrane regions (helical) follow at residues 121-141 (WLVF…GYIV), 174-194 (LVVL…GPFI), 195-215 (TSLY…PFRL), 220-240 (VAAF…GVYY), 252-272 (WSSP…VIAI), 299-319 (IAFL…AVAF), 328-348 (TVMV…TWVL), and 361-378 (YYRF…FFPL).

Belongs to the UbiA prenyltransferase family.

It is found in the plastid. It localises to the chloroplast thylakoid membrane. It catalyses the reaction phytyl diphosphate + homogentisate + H(+) = 2-methyl-6-phytyl-1,4-benzene-1,4-diol + CO2 + diphosphate. The protein operates within cofactor biosynthesis; tocopherol biosynthesis. Involved in the synthesis of tocopherol (vitamin E). Catalyzes the condensation of homogentisate and phytyl diphosphate to form dimethylphytylhydrquinone. This Oryza sativa subsp. japonica (Rice) protein is Probable homogentisate phytyltransferase 2, chloroplastic (HPT2).